Here is a 1104-residue protein sequence, read N- to C-terminus: Protein transport protein SEC31 homolog B (1104 aa).

7 WD repeats span residues 5-45 (KGVG…EIFK), 62-109 (PSSE…GSQP), 120-160 (VHKG…EPSH), 170-210 (ATQG…PIIN), 214-257 (SVRR…SPVR), 261-301 (GHQR…IVAE), and 304-344 (AGNN…RYGV). At Thr526 the chain carries Phosphothreonine. The tract at residues 527–562 (PVSTSAKDFMPSDTDFSTKGEETQEMQEEEEESSDP) is disordered. Residues 549 to 560 (TQEMQEEEEESS) show a composition bias toward acidic residues. Residues 662-707 (TLCDALASKLMAAGNTLAAVLCYICAGNVDRTVEIWSRSLANERDG) form a WD 8 repeat. Disordered stretches follow at residues 782–811 (LSAE…PTQA), 851–874 (HQAQ…PSMR), 892–931 (QQPT…QYPN), and 952–994 (TPGV…SNVP). Composition is skewed to polar residues over residues 786-811 (PETN…PTQA), 863-874 (PAPTSNAQPSMR), and 892-908 (QQPT…SNNA). Residues 959–977 (SVQPASPPTQQAAAQAAPA) are compositionally biased toward low complexity.

Belongs to the WD repeat SEC31 family. In terms of assembly, interacts with SEC13A and SEC13B.

The protein resides in the golgi apparatus. It is found in the endoplasmic reticulum. Required for protein transport from the endoplasmic reticulum to the Golgi apparatus. This chain is Protein transport protein SEC31 homolog B, found in Arabidopsis thaliana (Mouse-ear cress).